A 147-amino-acid chain; its full sequence is Hemoglobin subunit beta (147 aa).

V2 carries the post-translational modification N-acetylvaline. The Globin domain maps to 3 to 147 (HLTPEEKNAV…VANALAHKYH (145 aa)). T13 is subject to Phosphothreonine. The residue at position 45 (S45) is a Phosphoserine. K60 carries the post-translational modification N6-acetyllysine. H64 is a heme b binding site. Position 83 is an N6-acetyllysine (K83). A heme b-binding site is contributed by H93. C94 carries the post-translational modification S-nitrosocysteine. Residue K145 is modified to N6-acetyllysine.

The protein belongs to the globin family. Heterotetramer of two alpha chains and two beta chains. Red blood cells.

Its function is as follows. Involved in oxygen transport from the lung to the various peripheral tissues. The chain is Hemoglobin subunit beta (HBB) from Papio anubis (Olive baboon).